The chain runs to 187 residues: Adenylate kinase (187 aa).

Residue 10 to 15 coordinates ATP; the sequence is GSGKGT. The interval 30–59 is NMP; sequence STGDLLRSEVVAGTPLGLQAKQVMAQGDLV. AMP contacts are provided by residues Thr-31, Arg-36, 57 to 59, 85 to 88, and Gln-92; these read DLV and GYPR. The interval 126-136 is LID; sequence GRAQAEGREDD. Arg-127 lines the ATP pocket. Residues Arg-133 and Arg-144 each contribute to the AMP site. Gly-172 is an ATP binding site.

The protein belongs to the adenylate kinase family. Monomer.

Its subcellular location is the cytoplasm. The enzyme catalyses AMP + ATP = 2 ADP. It functions in the pathway purine metabolism; AMP biosynthesis via salvage pathway; AMP from ADP: step 1/1. In terms of biological role, catalyzes the reversible transfer of the terminal phosphate group between ATP and AMP. Plays an important role in cellular energy homeostasis and in adenine nucleotide metabolism. The sequence is that of Adenylate kinase from Xylella fastidiosa (strain 9a5c).